The following is a 989-amino-acid chain: MMESGVPPCAACGDDAHAACRACSYALCKACLDEDAAEGRTTCARCGGEYGAPDPAHGQGAVVEEEVEESHEPVASGVRERVTMASQLSDHQDEGVHARTMSTHARTISSVSGVGSELNDESGKPIWKNRVESWKEKKKEKKASAKKAAAKAQAPPVEEQIMDEKDLTDAYEPLSRIIPISKNKLTPYRAVIIMRLVVLGLFFHYRITNPVYSAFGLWMTSVICEIWFGFSWILDQFPKWCPINRETYVDRLIARYGDGEDSGLAPVDFFVSTVDPLKEPPLITANTVLSILAVDYPVEKISCYVSDDGSAMLTFESLAETAEFARRWVPFCKKYSIEPRAPEFYFSQKIDYLKDKIHPSFVKERRAMKRDYEEYKVRINALVAKAQKTPEEGWIMQDGTPWPGNNPRDHPGMIQVFLGETGARDFDGNELPRLVYVSREKRPGYQHHKKAGAMNALVRVSAVLTNAPYILNLDCDHYVNNSKAVREAMCFMMDPSVGRDVCYVQFPQRFDGIDRSDRYANRNVVFFDVNMKGLDGLQGPVYVGTGCCFYRQALYGYGPPSLPALPKSSVCSWCCCCCPKKKAEKSEKEMHRDSRREDLESAIFNLREIDNYDEYERSMLISQMSFEKSFGLSSVFIESTLMENGGVPESANPSTLIKEAIHVISCGYEEKTEWGKEIGWIYGSVTEDILTGFKMHCRGWRSIYCMPIRPAFKGSAPINLSDRLHQVLRWALGSVEIFLSRHCPLWYGYGGGRLKWLQRLSYINTIVYPFTSLPLIAYCCLPAICLLTGKFIIPTLSNAATIWFLGLFISIIVTSVLELRWSGIGIEDWWRNEQFWVIGGVSAHLFAVFQGILKMIAGLDTNFTVTAKATDDTEFGELYVFKWTTVLIPPTSILVLNLVGVVAGFSDALNSGYESWGPLFGKVFFAMWVIMHLYPFLKGLMGRQNRTPTIVVLWSVLLASVFSLLWVKIDPFIGSSETTTTNSCANFDC.

Topologically, residues 1 to 184 are cytoplasmic; it reads MMESGVPPCA…SRIIPISKNK (184 aa). Zn(2+) contacts are provided by cysteine 9, cysteine 12, cysteine 20, cysteine 23, cysteine 28, cysteine 31, cysteine 43, and cysteine 46. An RING-type; degenerate zinc finger spans residues 9-47; that stretch reads CAACGDDAHAACRACSYALCKACLDEDAAEGRTTCARCG. Positions 138 to 149 are enriched in basic residues; sequence KKEKKASAKKAA. Residues 138-158 form a disordered region; the sequence is KKEKKASAKKAAAKAQAPPVE. A helical membrane pass occupies residues 185–205; sequence LTPYRAVIIMRLVVLGLFFHY. Residues 206 to 213 lie on the Extracellular side of the membrane; it reads RITNPVYS. The chain crosses the membrane as a helical span at residues 214–234; sequence AFGLWMTSVICEIWFGFSWIL. Residues 235–772 lie on the Cytoplasmic side of the membrane; sequence DQFPKWCPIN…INTIVYPFTS (538 aa). Residues serine 272, lysine 278, glutamate 279, and aspartate 308 each contribute to the UDP-alpha-D-glucose site. The active site involves aspartate 308. The stretch at 362 to 389 forms a coiled coil; the sequence is VKERRAMKRDYEEYKVRINALVAKAQKT. Lysine 449 is a binding site for UDP-alpha-D-glucose. Residues lysine 450 and aspartate 474 each coordinate Mn(2+). Residue aspartate 688 is part of the active site. Residues 773 to 793 traverse the membrane as a helical segment; that stretch reads LPLIAYCCLPAICLLTGKFII. The Extracellular segment spans residues 794-798; that stretch reads PTLSN. The helical transmembrane segment at 799-819 threads the bilayer; the sequence is AATIWFLGLFISIIVTSVLEL. At 820-835 the chain is on the cytoplasmic side; that stretch reads RWSGIGIEDWWRNEQF. The helical transmembrane segment at 836–856 threads the bilayer; the sequence is WVIGGVSAHLFAVFQGILKMI. Residues 857-884 are Extracellular-facing; that stretch reads AGLDTNFTVTAKATDDTEFGELYVFKWT. Asparagine 862 carries an N-linked (GlcNAc...) asparagine glycan. Residues 885–905 form a helical membrane-spanning segment; sequence TVLIPPTSILVLNLVGVVAGF. The Cytoplasmic portion of the chain corresponds to 906–916; it reads SDALNSGYESW. A helical membrane pass occupies residues 917-937; it reads GPLFGKVFFAMWVIMHLYPFL. Residues 938–946 are Extracellular-facing; it reads KGLMGRQNR. The helical transmembrane segment at 947–967 threads the bilayer; sequence TPTIVVLWSVLLASVFSLLWV. Residues 968–989 are Cytoplasmic-facing; it reads KIDPFIGSSETTTTNSCANFDC.

It belongs to the glycosyltransferase 2 family. Plant cellulose synthase subfamily. Requires Mn(2+) as cofactor. Zn(2+) is required as a cofactor.

The protein localises to the cell membrane. The catalysed reaction is [(1-&gt;4)-beta-D-glucosyl](n) + UDP-alpha-D-glucose = [(1-&gt;4)-beta-D-glucosyl](n+1) + UDP + H(+). The protein operates within glycan metabolism; plant cellulose biosynthesis. Functionally, catalytic subunit of cellulose synthase terminal complexes ('rosettes'), required for beta-1,4-glucan microfibril crystallization, a major mechanism of the cell wall formation. Involved in the secondary cell wall formation. In Oryza sativa subsp. indica (Rice), this protein is Cellulose synthase A catalytic subunit 4 [UDP-forming] (CESA4).